A 391-amino-acid polypeptide reads, in one-letter code: 3-ketoacyl-CoA thiolase, peroxisomal (391 aa).

Residue Cys-92 is the Acyl-thioester intermediate of the active site. Active-site proton acceptor residues include His-335 and Cys-366.

The protein belongs to the thiolase-like superfamily. Thiolase family. As to quaternary structure, homodimer.

The protein localises to the peroxisome. It carries out the reaction an acyl-CoA + acetyl-CoA = a 3-oxoacyl-CoA + CoA. Its pathway is lipid metabolism; fatty acid metabolism. This chain is 3-ketoacyl-CoA thiolase, peroxisomal (FOX3), found in Encephalitozoon cuniculi (strain GB-M1) (Microsporidian parasite).